Consider the following 615-residue polypeptide: Prickle planar cell polarity protein 3 (615 aa).

The segment covering 1–12 (MFARGSRRRRSG) has biased composition (basic residues). A disordered region spans residues 1 to 26 (MFARGSRRRRSGRAPPEAEDPDRGQP). In terms of domain architecture, PET spans 74–182 (SDFQRHSISD…IVRIFPVTIT (109 aa)). 3 LIM zinc-binding domains span residues 184 to 249 (AICE…CLRP), 250 to 309 (RCQA…RHAE), and 310 to 373 (YCDG…SEPT). Disordered regions lie at residues 396–567 (ASFS…LGER) and 587–615 (TFNS…CIVA). A compositionally biased stretch (polar residues) spans 405-415 (SETTTKGTSTE). 2 positions are modified to phosphoserine: Ser475 and Ser491. Basic residues predominate over residues 508 to 531 (PSRRRHHHHNHHHHHNRHPSRRRH). Low complexity predominate over residues 537–555 (GSGSDSESCSSSPSSSSSE). Positions 606–615 (QARDKNCIVA) are enriched in basic and acidic residues.

This sequence belongs to the prickle / espinas / testin family. Interacts with VANGL2 via its C-terminus. The VANGL2-dependent membrane recruitment of PRICKLE3 is a prerequisite for its polarization. Interacts with WTIP. WTIP is involved in the recruitment of PRICKLE3 to the basal body. Interacts with MT-ATP8, a component of the mitochondrial complex V. In terms of tissue distribution, widely expressed.

The protein resides in the cytoplasm. It localises to the cell membrane. Its subcellular location is the mitochondrion. In terms of biological role, involved in the planar cell polarity (PCP) pathway that is essential for the polarization of epithelial cells during morphogenetic processes, including gastrulation and neurulation. PCP is maintained by two molecular modules, the global and the core modules, PRICKLE3 being part of the core module. Distinct complexes of the core module segregate to opposite sides of the cell, where they interact with the opposite complex in the neighboring cell at or near the adherents junctions. Involved in the organization of the basal body. Involved in cilia growth and positioning. Required for proper assembly, stability, and function of mitochondrial membrane ATP synthase (mitochondrial complex V). This Homo sapiens (Human) protein is Prickle planar cell polarity protein 3.